Reading from the N-terminus, the 168-residue chain is NADH-quinone oxidoreductase subunit B (168 aa).

[4Fe-4S] cluster-binding residues include cysteine 37, cysteine 38, cysteine 103, and cysteine 132.

The protein belongs to the complex I 20 kDa subunit family. As to quaternary structure, NDH-1 is composed of 14 different subunits. Subunits NuoB, C, D, E, F, and G constitute the peripheral sector of the complex. [4Fe-4S] cluster is required as a cofactor.

The protein resides in the cell inner membrane. It carries out the reaction a quinone + NADH + 5 H(+)(in) = a quinol + NAD(+) + 4 H(+)(out). Functionally, NDH-1 shuttles electrons from NADH, via FMN and iron-sulfur (Fe-S) centers, to quinones in the respiratory chain. The immediate electron acceptor for the enzyme in this species is believed to be ubiquinone. Couples the redox reaction to proton translocation (for every two electrons transferred, four hydrogen ions are translocated across the cytoplasmic membrane), and thus conserves the redox energy in a proton gradient. In Campylobacter fetus subsp. fetus (strain 82-40), this protein is NADH-quinone oxidoreductase subunit B.